The sequence spans 225 residues: MFSFGIILLTVVSFTNAQWRQDMFTTAENQLRSIVQNGQTLLDFIYQERQKHGGGNMTGGSLMSHNVAYSSFINDVETRLADMEQATQELVRIMRTCPDAPLAPPPPTNVIVESTTIDNVSSIVVKWDPPFNPPENMQYKVYFVPVDQNGMQTAGEVVFRICDSTQTIASITDLTPRSRYRIRVGAVAGAVAEGASMPLNVKTPDIIPSRVRNVMVKSSTANTIT.

An N-terminal signal peptide occupies residues 1 to 17; it reads MFSFGIILLTVVSFTNA. One can recognise a Fibronectin type-III domain in the interval 106 to 206; that stretch reads PPTNVIVEST…MPLNVKTPDI (101 aa).

As to expression, component of the organic matrix of calcified shell layers like nacre and prisms.

The protein localises to the secreted. This Mytilus californianus (California mussel) protein is Fibronectin type III domain-containing protein.